The chain runs to 213 residues: Orotate phosphoribosyltransferase (213 aa).

K26 is a 5-phospho-alpha-D-ribose 1-diphosphate binding site. Residue 34–35 (FF) participates in orotate binding. Residues 72–73 (YK), R99, K100, K103, H105, and 124–132 (DDVITAGTA) contribute to the 5-phospho-alpha-D-ribose 1-diphosphate site. The orotate site is built by T128 and R156.

The protein belongs to the purine/pyrimidine phosphoribosyltransferase family. PyrE subfamily. As to quaternary structure, homodimer. The cofactor is Mg(2+).

The enzyme catalyses orotidine 5'-phosphate + diphosphate = orotate + 5-phospho-alpha-D-ribose 1-diphosphate. It participates in pyrimidine metabolism; UMP biosynthesis via de novo pathway; UMP from orotate: step 1/2. In terms of biological role, catalyzes the transfer of a ribosyl phosphate group from 5-phosphoribose 1-diphosphate to orotate, leading to the formation of orotidine monophosphate (OMP). This Pseudomonas putida (strain GB-1) protein is Orotate phosphoribosyltransferase.